Consider the following 443-residue polypeptide: Putative cytochrome bd menaquinol oxidase subunit I (443 aa).

9 helical membrane-spanning segments follow: residues 19–39 (IIFA…ELIY), 60–80 (VLLG…ALLW), 93–113 (LPFQ…SIYV), 125–145 (IVAV…ITNV), 176–196 (FFIT…FIVA), 219–239 (ALLL…LNGH), 322–342 (LFNA…IGVV), 357–377 (LIIF…GWIF), and 405–425 (VLFL…VYVL). His182 contributes to the heme b binding site.

The protein belongs to the cytochrome ubiquinol oxidase subunit 1 family. Heme b is required as a cofactor.

It localises to the cell membrane. In terms of biological role, may have a role in sporulation. Can compensate for the loss of cytochrome aa3. The protein is Putative cytochrome bd menaquinol oxidase subunit I (ythA) of Bacillus subtilis (strain 168).